The sequence spans 174 residues: Crossover junction endodeoxyribonuclease RuvC (174 aa).

Residues Asp-8, Glu-67, and Asp-139 contribute to the active site. Mg(2+)-binding residues include Asp-8, Glu-67, and Asp-139.

This sequence belongs to the RuvC family. As to quaternary structure, homodimer which binds Holliday junction (HJ) DNA. The HJ becomes 2-fold symmetrical on binding to RuvC with unstacked arms; it has a different conformation from HJ DNA in complex with RuvA. In the full resolvosome a probable DNA-RuvA(4)-RuvB(12)-RuvC(2) complex forms which resolves the HJ. Mg(2+) serves as cofactor.

It localises to the cytoplasm. The catalysed reaction is Endonucleolytic cleavage at a junction such as a reciprocal single-stranded crossover between two homologous DNA duplexes (Holliday junction).. The RuvA-RuvB-RuvC complex processes Holliday junction (HJ) DNA during genetic recombination and DNA repair. Endonuclease that resolves HJ intermediates. Cleaves cruciform DNA by making single-stranded nicks across the HJ at symmetrical positions within the homologous arms, yielding a 5'-phosphate and a 3'-hydroxyl group; requires a central core of homology in the junction. The consensus cleavage sequence is 5'-(A/T)TT(C/G)-3'. Cleavage occurs on the 3'-side of the TT dinucleotide at the point of strand exchange. HJ branch migration catalyzed by RuvA-RuvB allows RuvC to scan DNA until it finds its consensus sequence, where it cleaves and resolves the cruciform DNA. This chain is Crossover junction endodeoxyribonuclease RuvC, found in Pseudomonas putida (strain GB-1).